The chain runs to 334 residues: Protein U17/U16 (334 aa).

Belongs to the herpesviridae US22 family.

In terms of biological role, isoform 3 can transactivate the human immunodeficiency virus type 1 promoter. The sequence is that of Protein U17/U16 (U17/U16) from Human herpesvirus 6A (strain Uganda-1102) (HHV-6 variant A).